The sequence spans 1430 residues: DNA-directed RNA polymerase subunit beta' (1430 aa).

Positions 71, 73, 86, and 89 each coordinate Zn(2+). The Mg(2+) site is built by aspartate 461, aspartate 463, and aspartate 465. Zn(2+)-binding residues include cysteine 815, cysteine 889, cysteine 896, and cysteine 899. A disordered region spans residues 1388–1430; it reads RRQEAPAPAATPEQQAEEVFASLGQGEGEGPSPSDEASGPEVE. Residues 1392 to 1405 show a composition bias toward low complexity; sequence APAPAATPEQQAEE.

The protein belongs to the RNA polymerase beta' chain family. The RNAP catalytic core consists of 2 alpha, 1 beta, 1 beta' and 1 omega subunit. When a sigma factor is associated with the core the holoenzyme is formed, which can initiate transcription. It depends on Mg(2+) as a cofactor. Zn(2+) serves as cofactor.

The catalysed reaction is RNA(n) + a ribonucleoside 5'-triphosphate = RNA(n+1) + diphosphate. Its function is as follows. DNA-dependent RNA polymerase catalyzes the transcription of DNA into RNA using the four ribonucleoside triphosphates as substrates. The polypeptide is DNA-directed RNA polymerase subunit beta' (Halorhodospira halophila (strain DSM 244 / SL1) (Ectothiorhodospira halophila (strain DSM 244 / SL1))).